A 171-amino-acid chain; its full sequence is Ribosome maturation factor RimM (171 aa).

In terms of domain architecture, PRC barrel spans 96–170; the sequence is AEGEYYYHEI…LVTIHVTEGL (75 aa).

This sequence belongs to the RimM family. In terms of assembly, binds ribosomal protein uS19.

It localises to the cytoplasm. Its function is as follows. An accessory protein needed during the final step in the assembly of 30S ribosomal subunit, possibly for assembly of the head region. Essential for efficient processing of 16S rRNA. May be needed both before and after RbfA during the maturation of 16S rRNA. It has affinity for free ribosomal 30S subunits but not for 70S ribosomes. In Bacillus anthracis (strain A0248), this protein is Ribosome maturation factor RimM.